We begin with the raw amino-acid sequence, 101 residues long: Small ribosomal subunit protein uS14 (101 aa).

This sequence belongs to the universal ribosomal protein uS14 family. Part of the 30S ribosomal subunit. Contacts proteins S3 and S10.

Functionally, binds 16S rRNA, required for the assembly of 30S particles and may also be responsible for determining the conformation of the 16S rRNA at the A site. In Arthrobacter sp. (strain FB24), this protein is Small ribosomal subunit protein uS14.